The sequence spans 833 residues: Leucine--tRNA ligase (833 aa).

The short motif at 41–52 (PYPSGAGLHVGH) is the 'HIGH' region element. Residues 610 to 614 (KMSKS) carry the 'KMSKS' region motif. Position 613 (K613) interacts with ATP.

The protein belongs to the class-I aminoacyl-tRNA synthetase family.

It localises to the cytoplasm. It catalyses the reaction tRNA(Leu) + L-leucine + ATP = L-leucyl-tRNA(Leu) + AMP + diphosphate. The chain is Leucine--tRNA ligase from Streptococcus pyogenes serotype M2 (strain MGAS10270).